Consider the following 438-residue polypeptide: ATP-dependent RNA helicase SUB2 (438 aa).

A compositionally biased stretch (acidic residues) spans 1–19 (MSHEGEEDLLEYSDNEQEI). Positions 1–44 (MSHEGEEDLLEYSDNEQEIQVDNTKATEVAGNGEEAADGKDGDK) are disordered. The short motif at 54–82 (TGFKDFLLKPELSRAIIDCGFEHPSEVQQ) is the Q motif element. Residues 85–260 (IPQSIHGTDV…RRFLQNPLEI (176 aa)) enclose the Helicase ATP-binding domain. 98-105 (AKSGLGKT) is a binding site for ATP. A DECD box motif is present at residues 207–210 (DECD). A Helicase C-terminal domain is found at 272–433 (GLQQYYIRLE…EFPEEGVDPS (162 aa)).

Belongs to the DEAD box helicase family. DECD subfamily.

Its subcellular location is the nucleus. It carries out the reaction ATP + H2O = ADP + phosphate + H(+). Its function is as follows. ATP-binding RNA helicase involved in transcription elongation and required for the export of mRNA out of the nucleus. SUB2 also plays a role in pre-mRNA splicing and spliceosome assembly. May be involved in rDNA and telomeric silencing, and maintenance of genome integrity. The sequence is that of ATP-dependent RNA helicase SUB2 (SUB2) from Eremothecium gossypii (strain ATCC 10895 / CBS 109.51 / FGSC 9923 / NRRL Y-1056) (Yeast).